A 255-amino-acid polypeptide reads, in one-letter code: Large ribosomal subunit protein uL4 (255 aa).

It belongs to the universal ribosomal protein uL4 family. Part of the 50S ribosomal subunit.

One of the primary rRNA binding proteins, this protein initially binds near the 5'-end of the 23S rRNA. It is important during the early stages of 50S assembly. It makes multiple contacts with different domains of the 23S rRNA in the assembled 50S subunit and ribosome. Its function is as follows. Forms part of the polypeptide exit tunnel. This chain is Large ribosomal subunit protein uL4, found in Pyrococcus furiosus (strain ATCC 43587 / DSM 3638 / JCM 8422 / Vc1).